The primary structure comprises 226 residues: MLLRIANVFSREETARIRVALEQAAWQDGRVTAGYQSAKAKHNLQLAEDDPLAREIAEAMLQRLWQHPQFMSAALPSKVFPPLFNCYTAGGEFGYHIDNAVRQVRNSAERVRTDLSATLFFSDPDEYDGGDLVIQDTYGTQRVKFAAGDMVLYPSTSLHKVEPVTRGARLASFFWIQSLVREDAQRTLLYEMDQAIQQLTADVPDHPSLVQLTGTYHNLLRRWVEV.

The region spanning 78–178 (KVFPPLFNCY…RLASFFWIQS (101 aa)) is the Fe2OG dioxygenase domain. Residues histidine 96, aspartate 98, and histidine 159 each contribute to the Fe cation site. Arginine 169 serves as a coordination point for 2-oxoglutarate.

Fe(2+) serves as cofactor. The cofactor is L-ascorbate.

In Stutzerimonas stutzeri (strain A1501) (Pseudomonas stutzeri), this protein is PKHD-type hydroxylase PST_0995.